The chain runs to 443 residues: Tol-Pal system protein TolB (443 aa).

An N-terminal signal peptide occupies residues 1-33 (MKIGIINTKIRTVFSAFACMIAASLVCTMPARA).

The protein belongs to the TolB family. As to quaternary structure, the Tol-Pal system is composed of five core proteins: the inner membrane proteins TolA, TolQ and TolR, the periplasmic protein TolB and the outer membrane protein Pal. They form a network linking the inner and outer membranes and the peptidoglycan layer.

The protein resides in the periplasm. Its function is as follows. Part of the Tol-Pal system, which plays a role in outer membrane invagination during cell division and is important for maintaining outer membrane integrity. The protein is Tol-Pal system protein TolB of Brucella anthropi (strain ATCC 49188 / DSM 6882 / CCUG 24695 / JCM 21032 / LMG 3331 / NBRC 15819 / NCTC 12168 / Alc 37) (Ochrobactrum anthropi).